A 469-amino-acid polypeptide reads, in one-letter code: 3-isopropylmalate dehydratase large subunit (469 aa).

The [4Fe-4S] cluster site is built by cysteine 347, cysteine 410, and cysteine 413.

Belongs to the aconitase/IPM isomerase family. LeuC type 1 subfamily. As to quaternary structure, heterodimer of LeuC and LeuD. [4Fe-4S] cluster is required as a cofactor.

It catalyses the reaction (2R,3S)-3-isopropylmalate = (2S)-2-isopropylmalate. It participates in amino-acid biosynthesis; L-leucine biosynthesis; L-leucine from 3-methyl-2-oxobutanoate: step 2/4. Its function is as follows. Catalyzes the isomerization between 2-isopropylmalate and 3-isopropylmalate, via the formation of 2-isopropylmaleate. The polypeptide is 3-isopropylmalate dehydratase large subunit (Burkholderia lata (strain ATCC 17760 / DSM 23089 / LMG 22485 / NCIMB 9086 / R18194 / 383)).